The primary structure comprises 195 residues: Aminoglycoside 2'-N-acetyltransferase (195 aa).

One can recognise an N-acetyltransferase domain in the interval 21–180; that stretch reads VHTSDLDQET…VGLPAGMELD (160 aa). Substrate-binding positions include Asp45 and 92–93; that span reads EA. CoA contacts are provided by residues 94–96 and 101–106; these read VAV and RGQGLA. Substrate-binding positions include Ser127 and 161-162; that span reads ED.

It belongs to the AAC(2')-I acetyltransferase family. In terms of assembly, homodimer.

Functionally, confers resistance to gentamicin, tobramycin, dibekacin, netilmicin, and 6'-N-ethylnetilmicin. In Mycolicibacterium fortuitum (Mycobacterium fortuitum), this protein is Aminoglycoside 2'-N-acetyltransferase (aac).